A 451-amino-acid polypeptide reads, in one-letter code: Enolase (451 aa).

Glutamine 167 lines the (2R)-2-phosphoglycerate pocket. Residue glutamate 209 is the Proton donor of the active site. The Mg(2+) site is built by aspartate 250, glutamate 307, and aspartate 334. (2R)-2-phosphoglycerate is bound by residues lysine 359, arginine 388, serine 389, and lysine 410. The Proton acceptor role is filled by lysine 359.

Belongs to the enolase family. Requires Mg(2+) as cofactor.

Its subcellular location is the cytoplasm. It is found in the secreted. It localises to the cell surface. The enzyme catalyses (2R)-2-phosphoglycerate = phosphoenolpyruvate + H2O. It participates in carbohydrate degradation; glycolysis; pyruvate from D-glyceraldehyde 3-phosphate: step 4/5. Functionally, catalyzes the reversible conversion of 2-phosphoglycerate (2-PG) into phosphoenolpyruvate (PEP). It is essential for the degradation of carbohydrates via glycolysis. This Mesomycoplasma hyopneumoniae (strain J / ATCC 25934 / NCTC 10110) (Mycoplasma hyopneumoniae) protein is Enolase.